A 548-amino-acid chain; its full sequence is uncharacterized protein (548 aa).

2 positions are modified to phosphoserine: Ser-19 and Ser-25. Residue Thr-47 is modified to Phosphothreonine.

This is an uncharacterized protein from Schizosaccharomyces pombe (strain 972 / ATCC 24843) (Fission yeast).